The primary structure comprises 925 residues: Colossin-D (925 aa).

Residues 1–26 (MIKVFKDLKFLILITIILLNLKSINC) form the signal peptide. Residues N47, N95, N142, N166, N283, N334, N344, N378, N401, N511, and N642 are each glycosylated (N-linked (GlcNAc...) asparagine).

It belongs to the serine-aspartate repeat-containing protein (SDr) family.

It localises to the secreted. The chain is Colossin-D (colD) from Dictyostelium discoideum (Social amoeba).